The sequence spans 1059 residues: Carbamoyl phosphate synthase large chain (1059 aa).

Residues 1 to 401 (MPKRKDIQKI…SLLKACRSLE (401 aa)) form a carboxyphosphate synthetic domain region. ATP is bound by residues arginine 129, arginine 169, glycine 175, glycine 176, arginine 208, isoleucine 210, glutamate 215, glycine 241, isoleucine 242, histidine 243, glutamine 284, and glutamate 298. The ATP-grasp 1 domain maps to 133-327 (KQLMEELGQP…IAKLAAKIAV (195 aa)). 3 residues coordinate Mg(2+): glutamine 284, glutamate 298, and asparagine 300. Glutamine 284, glutamate 298, and asparagine 300 together coordinate Mn(2+). Residues 402 to 546 (VCVDHNELPA…YSTYGFENES (145 aa)) form an oligomerization domain region. Positions 547-929 (VKSSKESVLV…ALYKAFEASY (383 aa)) are carbamoyl phosphate synthetic domain. The 191-residue stretch at 671–861 (EQALKELDIP…MAQVATRLIL (191 aa)) folds into the ATP-grasp 2 domain. 10 residues coordinate ATP: arginine 707, serine 746, isoleucine 748, glutamate 752, glycine 777, valine 778, histidine 779, serine 780, glutamine 820, and glutamate 832. Glutamine 820, glutamate 832, and asparagine 834 together coordinate Mg(2+). Positions 820, 832, and 834 each coordinate Mn(2+). One can recognise an MGS-like domain in the interval 930–1059 (LHLPNFGNIV…ESRSFTTEAI (130 aa)). Residues 930 to 1059 (LHLPNFGNIV…ESRSFTTEAI (130 aa)) form an allosteric domain region.

Belongs to the CarB family. Composed of two chains; the small (or glutamine) chain promotes the hydrolysis of glutamine to ammonia, which is used by the large (or ammonia) chain to synthesize carbamoyl phosphate. Tetramer of heterodimers (alpha,beta)4. The cofactor is Mg(2+). Requires Mn(2+) as cofactor.

The catalysed reaction is hydrogencarbonate + L-glutamine + 2 ATP + H2O = carbamoyl phosphate + L-glutamate + 2 ADP + phosphate + 2 H(+). It carries out the reaction hydrogencarbonate + NH4(+) + 2 ATP = carbamoyl phosphate + 2 ADP + phosphate + 2 H(+). Its pathway is amino-acid biosynthesis; L-arginine biosynthesis; carbamoyl phosphate from bicarbonate: step 1/1. It functions in the pathway pyrimidine metabolism; UMP biosynthesis via de novo pathway; (S)-dihydroorotate from bicarbonate: step 1/3. Large subunit of the glutamine-dependent carbamoyl phosphate synthetase (CPSase). CPSase catalyzes the formation of carbamoyl phosphate from the ammonia moiety of glutamine, carbonate, and phosphate donated by ATP, constituting the first step of 2 biosynthetic pathways, one leading to arginine and/or urea and the other to pyrimidine nucleotides. The large subunit (synthetase) binds the substrates ammonia (free or transferred from glutamine from the small subunit), hydrogencarbonate and ATP and carries out an ATP-coupled ligase reaction, activating hydrogencarbonate by forming carboxy phosphate which reacts with ammonia to form carbamoyl phosphate. In Streptococcus sanguinis (strain SK36), this protein is Carbamoyl phosphate synthase large chain.